The chain runs to 178 residues: ATP synthase subunit delta (178 aa).

The protein belongs to the ATPase delta chain family. F-type ATPases have 2 components, F(1) - the catalytic core - and F(0) - the membrane proton channel. F(1) has five subunits: alpha(3), beta(3), gamma(1), delta(1), epsilon(1). F(0) has three main subunits: a(1), b(2) and c(10-14). The alpha and beta chains form an alternating ring which encloses part of the gamma chain. F(1) is attached to F(0) by a central stalk formed by the gamma and epsilon chains, while a peripheral stalk is formed by the delta and b chains.

It is found in the cell membrane. Its function is as follows. F(1)F(0) ATP synthase produces ATP from ADP in the presence of a proton or sodium gradient. F-type ATPases consist of two structural domains, F(1) containing the extramembraneous catalytic core and F(0) containing the membrane proton channel, linked together by a central stalk and a peripheral stalk. During catalysis, ATP synthesis in the catalytic domain of F(1) is coupled via a rotary mechanism of the central stalk subunits to proton translocation. This protein is part of the stalk that links CF(0) to CF(1). It either transmits conformational changes from CF(0) to CF(1) or is implicated in proton conduction. The sequence is that of ATP synthase subunit delta from Polynucleobacter asymbioticus (strain DSM 18221 / CIP 109841 / QLW-P1DMWA-1) (Polynucleobacter necessarius subsp. asymbioticus).